A 325-amino-acid chain; its full sequence is uncharacterized protein (325 aa).

2 coiled-coil regions span residues 38-69 (VHVA…QNQS) and 201-229 (ANTD…LEFK).

This is an uncharacterized protein from Acanthamoeba polyphaga (Amoeba).